The chain runs to 65 residues: Protein YSY6 (65 aa).

The helical transmembrane segment at 45-65 (LGILLFLLVGGGVLQLISYIL) threads the bilayer.

This sequence belongs to the RAMP4 family.

It localises to the membrane. Its subcellular location is the endoplasmic reticulum membrane. Functionally, interacts with target proteins during their translocation into the lumen of the endoplasmic reticulum. Protects unfolded target proteins against degradation during ER stress. May facilitate glycosylation of target proteins after termination of ER stress. This Saccharomyces cerevisiae (strain ATCC 204508 / S288c) (Baker's yeast) protein is Protein YSY6 (YSY6).